We begin with the raw amino-acid sequence, 146 residues long: Hemoglobin subunit beta-1 (146 aa).

One can recognise a Globin domain in the interval 2 to 146 (EWTDQERATI…VVSALGKQYH (145 aa)). Positions 63 and 92 each coordinate heme b.

Belongs to the globin family. In terms of assembly, hb1 is a heterotetramer of two alpha-1 chains and two beta-1 chains. Hb2 is a heterotetramer of two alpha-2 chains and two beta-1 chains. HbC is a heterotetramer of two alpha-1 chains and two beta-2 chains. Red blood cells.

In terms of biological role, involved in oxygen transport from gills to the various peripheral tissues. The polypeptide is Hemoglobin subunit beta-1 (Eleginops maclovinus (Patagonian blennie)).